The chain runs to 467 residues: Pentatricopeptide repeat-containing protein At1g77170, mitochondrial (467 aa).

Residues Met-1–Phe-30 constitute a mitochondrion transit peptide. PPR repeat units follow at residues Ile-81–Pro-115, Asp-116–Gly-150, Asp-151–Arg-181, Lys-182–Pro-216, Asp-217–Glu-251, Asp-254–Arg-284, Asn-285–Pro-319, Asn-320–Glu-350, and Gly-356–Lys-386. A type E motif region spans residues Val-391 to Thr-466.

This sequence belongs to the PPR family. PCMP-E subfamily.

The protein localises to the mitochondrion. The sequence is that of Pentatricopeptide repeat-containing protein At1g77170, mitochondrial (PCMP-E21) from Arabidopsis thaliana (Mouse-ear cress).